A 374-amino-acid chain; its full sequence is DNA replication and repair protein RecF (374 aa).

30–37 (GNNAQGKS) contributes to the ATP binding site.

This sequence belongs to the RecF family.

The protein resides in the cytoplasm. Its function is as follows. The RecF protein is involved in DNA metabolism; it is required for DNA replication and normal SOS inducibility. RecF binds preferentially to single-stranded, linear DNA. It also seems to bind ATP. In Nostoc punctiforme (strain ATCC 29133 / PCC 73102), this protein is DNA replication and repair protein RecF.